We begin with the raw amino-acid sequence, 759 residues long: Mitogen-activated protein kinase kinase kinase 1a (759 aa).

Composition is skewed to basic and acidic residues over residues 1 to 17 (MIEE…DRGS), 25 to 36 (SFEDKGSSHDWK), and 52 to 64 (AKKD…KVDS). Disordered stretches follow at residues 1-90 (MIEE…NLSK), 122-160 (LGIE…SHDF), 165-184 (SRVD…LAPM), and 195-239 (RKHR…PDPL). The segment covering 72 to 85 (VHSTSSPRLSPASS) has biased composition (low complexity). In terms of domain architecture, Protein kinase spans 426–679 (WAKGEFLGSG…CDMLLAHPFI (254 aa)). ATP-binding positions include 432–440 (LGSGTFGSV) and K454. The active-site Proton acceptor is D549.

This sequence belongs to the protein kinase superfamily. STE Ser/Thr protein kinase family. MAP kinase kinase kinase subfamily.

It is found in the cell membrane. The enzyme catalyses L-seryl-[protein] + ATP = O-phospho-L-seryl-[protein] + ADP + H(+). The catalysed reaction is L-threonyl-[protein] + ATP = O-phospho-L-threonyl-[protein] + ADP + H(+). Functionally, the CERK1, MEKK1a/b, MKK1a/b/c and MPK4a/b proteins are involved in pathogen defense. The pathway induces rapid growth inhibition, cell wall depositions and accumulation of defense-related transcripts. This protein is required for responses to chitin and acts redundantly with MEKK1b. This Physcomitrium patens (Spreading-leaved earth moss) protein is Mitogen-activated protein kinase kinase kinase 1a.